Reading from the N-terminus, the 516-residue chain is Squalene epoxidase 4 (516 aa).

2 helical membrane passes run 2-22 (TYAW…FHLI) and 43-63 (ATDV…YALA). FAD-binding positions include 53–54 (VA), 73–74 (ER), R81, R153, V169, D335, and M348. Residues 435 to 455 (ILGGMNPHPLTLVLHLVAITL) traverse the membrane as a helical segment.

This sequence belongs to the squalene monooxygenase family. FAD serves as cofactor. As to expression, expressed mainly in seedlings and inflorescences.

It localises to the membrane. It carries out the reaction squalene + reduced [NADPH--hemoprotein reductase] + O2 = (S)-2,3-epoxysqualene + oxidized [NADPH--hemoprotein reductase] + H2O + H(+). It functions in the pathway terpene metabolism; lanosterol biosynthesis; lanosterol from farnesyl diphosphate: step 2/3. In terms of biological role, catalyzes the stereospecific oxidation of squalene to (S)-2,3-epoxysqualene, and is considered to be a rate-limiting enzyme in steroid biosynthesis. In Arabidopsis thaliana (Mouse-ear cress), this protein is Squalene epoxidase 4 (SQE4).